A 209-amino-acid polypeptide reads, in one-letter code: uncharacterized protein (209 aa).

It belongs to the flavoredoxin family. It depends on FMN as a cofactor.

This is an uncharacterized protein from Halalkalibacterium halodurans (strain ATCC BAA-125 / DSM 18197 / FERM 7344 / JCM 9153 / C-125) (Bacillus halodurans).